An 897-amino-acid chain; its full sequence is 3'-5' exonuclease DinG (897 aa).

Positions 8 to 161 (VVDLETTGNQ…DEDAATTAKL (154 aa)) constitute an Exonuclease domain. A Helicase ATP-binding domain is found at 241–496 (SKAVDQLGLT…KAIDQLEKQR (256 aa)). 276 to 283 (ASLGSGKS) serves as a coordination point for ATP. Positions 448–451 (DEAH) match the DEAH box motif. Residues 703–893 (NIDEYVASIV…QFGKLLRQIQ (191 aa)) form the Helicase C-terminal domain.

The protein belongs to the helicase family. DinG subfamily. Type 2 sub-subfamily.

3'-5' exonuclease. This Staphylococcus aureus (strain USA300) protein is 3'-5' exonuclease DinG.